The primary structure comprises 275 residues: Aldo-keto reductase MSMEG_2408/MSMEI_2347 (275 aa).

Tyr49 acts as the Proton donor in catalysis. NADPH contacts are provided by Leu189, Ile227, Lys229, Ser230, Val231, Arg235, Ser238, and Asn239. Lys262 is covalently cross-linked (Isoglutamyl lysine isopeptide (Lys-Gln) (interchain with Q-Cter in protein Pup)).

This sequence belongs to the aldo/keto reductase family.

The protein is Aldo-keto reductase MSMEG_2408/MSMEI_2347 of Mycolicibacterium smegmatis (strain ATCC 700084 / mc(2)155) (Mycobacterium smegmatis).